The sequence spans 350 residues: Protein RecA (350 aa).

Residue 65 to 72 (GPESSGKT) coordinates ATP. The tract at residues 326-350 (HNLKTRNTADSKVTGAKDEKSKEEK) is disordered. A compositionally biased stretch (basic and acidic residues) spans 340 to 350 (GAKDEKSKEEK).

This sequence belongs to the RecA family.

The protein resides in the cytoplasm. Can catalyze the hydrolysis of ATP in the presence of single-stranded DNA, the ATP-dependent uptake of single-stranded DNA by duplex DNA, and the ATP-dependent hybridization of homologous single-stranded DNAs. It interacts with LexA causing its activation and leading to its autocatalytic cleavage. This chain is Protein RecA, found in Clostridium novyi (strain NT).